Reading from the N-terminus, the 361-residue chain is Basic helix-loop-helix protein 79 (361 aa).

The segment at 66-159 (APEASNGSGS…ASTVTAGQKT (94 aa)) is disordered. Positions 124 to 138 (GRPERARPGAKKKAE) are enriched in basic and acidic residues. Over residues 146–157 (PATSASTVTAGQ) the composition is skewed to polar residues. The Nuclear localization signal motif lies at 166 to 173 (ARRGQATD). Residues 170–183 (QATDSHSLAERVRR) form a basic motif; degenerate region. One can recognise a bHLH domain in the interval 170–220 (QATDSHSLAERVRRERISERMRYLQELVPGCNKVTGKAGMLDEIINYVQSL). The tract at residues 184–220 (ERISERMRYLQELVPGCNKVTGKAGMLDEIINYVQSL) is helix-loop-helix motif.

The protein belongs to the bHLH protein family. Homodimer. Interacts with IBH1.

Its subcellular location is the nucleus. Together with BCL1, positive regulator of cell elongation at least partially through increased gibberellic acid (GA) biosynthesis. The sequence is that of Basic helix-loop-helix protein 79 from Oryza sativa subsp. indica (Rice).